The primary structure comprises 697 residues: Envelope glycoprotein G (697 aa).

A signal peptide spans 1–22 (MHAIAPRLLLLFVLSGLPGTRG). Topologically, residues 23–648 (GSGVPGPINP…WFLTASPALD (626 aa)) are virion surface. N-linked (GlcNAc...) asparagine; by host glycans are attached at residues asparagine 104 and asparagine 163. Disordered stretches follow at residues 298–389 (HWAP…TTPP) and 402–630 (TPEE…PSGP). Residues 322 to 335 (LRTDPEGVDPDVRA) are compositionally biased toward basic and acidic residues. Low complexity-rich tracts occupy residues 375-389 (DPSAEPTAPATTTPP) and 402-445 (TPEE…AKTP). An N-linked (GlcNAc...) asparagine; by host glycan is attached at asparagine 435. Pro residues-rich tracts occupy residues 446–457 (PTTPAPTTPPPT) and 465–480 (PTTPGPQTTPPGPATP). Residues 481 to 529 (GPVGASAAPTADSPLTALPPATAPGPSAANVSVAATTATPGTRGTARTP) are compositionally biased toward low complexity. A glycan (N-linked (GlcNAc...) asparagine; by host) is linked at asparagine 510. Positions 542–552 (DAPPGSPAPPP) are enriched in pro residues. Residues 560-576 (EEFEGAGDGEPPEDDDS) are compositionally biased toward acidic residues. Residues 587-603 (PNKPPPARPGPIRPTLP) show a composition bias toward pro residues. A helical transmembrane segment spans residues 649-669 (ILFIISTTIHTAAFVCLVALA). The Intravirion portion of the chain corresponds to 670 to 697 (AQLWRGRAGRRRYAHPSVRYVCLPPERD).

It belongs to the alphaherpesvirinae glycoprotein G family.

Its subcellular location is the virion membrane. Functionally, chemokine-binding protein that inhibits neutrophils' chemotaxis. The protein is Envelope glycoprotein G (gG) of Homo sapiens (Human).